Here is a 466-residue protein sequence, read N- to C-terminus: mRNA-capping enzyme subunit alpha (466 aa).

Lysine 67 serves as the catalytic N6-GMP-lysine intermediate. Residues 408–466 (REQGLKNAQKQFNHQASARSSLSQQHSTEPEQSQDQPKYVDDDDDNWSDDEPDTKRQKI) form a disordered region. Residues 413-443 (KNAQKQFNHQASARSSLSQQHSTEPEQSQDQ) are compositionally biased toward polar residues. The segment covering 448 to 459 (DDDDDNWSDDEP) has biased composition (acidic residues).

It belongs to the eukaryotic GTase family. Heterodimer. The mRNA-capping enzyme is composed of two separate chains alpha and beta, respectively a mRNA guanylyltransferase and an mRNA 5'-triphosphate monophosphatase.

The protein localises to the nucleus. It catalyses the reaction a 5'-end diphospho-ribonucleoside in mRNA + GTP + H(+) = a 5'-end (5'-triphosphoguanosine)-ribonucleoside in mRNA + diphosphate. Second step of mRNA capping. Transfer of the GMP moiety of GTP to the 5'-end of RNA via an enzyme-GMP covalent reaction intermediate. This chain is mRNA-capping enzyme subunit alpha (CEG1), found in Kluyveromyces lactis (strain ATCC 8585 / CBS 2359 / DSM 70799 / NBRC 1267 / NRRL Y-1140 / WM37) (Yeast).